The chain runs to 163 residues: NADH-quinone oxidoreductase subunit I (163 aa).

4Fe-4S ferredoxin-type domains are found at residues 53–83 (LRRYPNGEERCIACKLCEAICPAQAITIEAG) and 94–123 (VRYDIDMVKCIYCGFCQEACPVEAIVEGPN). Positions 63, 66, 69, 73, 103, 106, 109, and 113 each coordinate [4Fe-4S] cluster.

This sequence belongs to the complex I 23 kDa subunit family. As to quaternary structure, NDH-1 is composed of 14 different subunits. Subunits NuoA, H, J, K, L, M, N constitute the membrane sector of the complex. [4Fe-4S] cluster serves as cofactor.

It localises to the cell inner membrane. It carries out the reaction a quinone + NADH + 5 H(+)(in) = a quinol + NAD(+) + 4 H(+)(out). NDH-1 shuttles electrons from NADH, via FMN and iron-sulfur (Fe-S) centers, to quinones in the respiratory chain. The immediate electron acceptor for the enzyme in this species is believed to be ubiquinone. Couples the redox reaction to proton translocation (for every two electrons transferred, four hydrogen ions are translocated across the cytoplasmic membrane), and thus conserves the redox energy in a proton gradient. The chain is NADH-quinone oxidoreductase subunit I from Bartonella bacilliformis (strain ATCC 35685 / KC583 / Herrer 020/F12,63).